A 164-amino-acid polypeptide reads, in one-letter code: 3-isopropylmalate dehydratase small subunit (164 aa).

The protein belongs to the LeuD family. LeuD type 2 subfamily. As to quaternary structure, heterodimer of LeuC and LeuD.

It carries out the reaction (2R,3S)-3-isopropylmalate = (2S)-2-isopropylmalate. Its pathway is amino-acid biosynthesis; L-leucine biosynthesis; L-leucine from 3-methyl-2-oxobutanoate: step 2/4. Catalyzes the isomerization between 2-isopropylmalate and 3-isopropylmalate, via the formation of 2-isopropylmaleate. This Syntrophus aciditrophicus (strain SB) protein is 3-isopropylmalate dehydratase small subunit.